Reading from the N-terminus, the 349-residue chain is MRATSLAASADVPCRKKPLEFDDNIDVECPVLKRVRDEPEPGPTPSLPPASDLSPAVAPATRLGPYILLEREQGNCTYRALHCPTGTEYTCKVYPASEAQAVLAPYARLPTHQHVARPTEVLLGSQLLYTFFTKTHGDLHSLVRSRRGIPEPEAAALFRQMASAVAHCHKHGLILRDLKLRRFVFSNCERTKLVLENLEDACVMTGPDDSLWDKHACPAYVGPEILSSRPSYSGRAADVWSLGVALFTMLAGRYPFQDSEPALLFGKIRRGTFALPEGLSASARCLIRCLLRREPSERLVALGILLHPWLREDCSQVSPPRSDRREMDQVVPDGPQLEEAEEGEVGLYG.

The tract at residues 1–122 (MRATSLAASA…QHVARPTEVL (122 aa)) is interaction with DDIT3/CHOP. The interval 35-57 (VRDEPEPGPTPSLPPASDLSPAV) is disordered. The Protein kinase domain occupies 63 to 310 (LGPYILLERE…ALGILLHPWL (248 aa)). Positions 317-349 (VSPPRSDRREMDQVVPDGPQLEEAEEGEVGLYG) are disordered. A compositionally biased stretch (acidic residues) spans 336–349 (QLEEAEEGEVGLYG).

This sequence belongs to the protein kinase superfamily. CAMK Ser/Thr protein kinase family. Tribbles subfamily. In terms of assembly, interacts with AKT1, AKT2, MAP2K1 and MAP2K7. Interacts with ATF4. Interacts with DDIT3/CHOP and inhibits its interaction with EP300/P300. Interacts with APOBEC3C. Interacts (via N-terminus) with APOBEC3A. Interacts with RELA. In terms of tissue distribution, detected only in the lung. Not detected in the heart, brain, spleen, liver, skeletal muscle, kidney and testis.

It is found in the nucleus. In terms of biological role, inactive protein kinase which acts as a regulator of the integrated stress response (ISR), a process for adaptation to various stress. Inhibits the transcriptional activity of DDIT3/CHOP and is involved in DDIT3/CHOP-dependent cell death during ER stress. May play a role in programmed neuronal cell death but does not appear to affect non-neuronal cells. Acts as a negative feedback regulator of the ATF4-dependent transcription during the ISR: while TRIB3 expression is promoted by ATF4, TRIB3 protein interacts with ATF4 and inhibits ATF4 transcription activity. Disrupts insulin signaling by binding directly to Akt kinases and blocking their activation. May bind directly to and mask the 'Thr-308' phosphorylation site in AKT1. Interacts with the NF-kappa-B transactivator p65 RELA and inhibits its phosphorylation and thus its transcriptional activation activity. Interacts with MAPK kinases and regulates activation of MAP kinases. Can inhibit APOBEC3A editing of nuclear DNA. This chain is Tribbles homolog 3 (Trib3), found in Rattus norvegicus (Rat).